The primary structure comprises 320 residues: Ferrochelatase (320 aa).

Residues His-194 and Glu-275 each coordinate Fe cation.

Belongs to the ferrochelatase family. In terms of assembly, monomer.

The protein localises to the cytoplasm. The catalysed reaction is heme b + 2 H(+) = protoporphyrin IX + Fe(2+). The protein operates within porphyrin-containing compound metabolism; protoheme biosynthesis; protoheme from protoporphyrin-IX: step 1/1. Its function is as follows. Catalyzes the ferrous insertion into protoporphyrin IX. In Escherichia coli O157:H7 (strain EC4115 / EHEC), this protein is Ferrochelatase.